Reading from the N-terminus, the 180-residue chain is Negative modulator of initiation of replication (180 aa).

Interaction with DNA stretches follow at residues 86–87 (AV), 115–119 (RTRVY), and 149–155 (NTNTGRK).

This sequence belongs to the SeqA family. As to quaternary structure, homodimer. Polymerizes to form helical filaments.

The protein resides in the cytoplasm. Functionally, negative regulator of replication initiation, which contributes to regulation of DNA replication and ensures that replication initiation occurs exactly once per chromosome per cell cycle. Binds to pairs of hemimethylated GATC sequences in the oriC region, thus preventing assembly of replication proteins and re-initiation at newly replicated origins. Repression is relieved when the region becomes fully methylated. The polypeptide is Negative modulator of initiation of replication (Enterobacter sp. (strain 638)).